The following is a 148-amino-acid chain: Large ribosomal subunit protein uL15 (148 aa).

A disordered region spans residues 18-38; it reads GYGRVGKHRKHPGGRGNAGGL.

The protein belongs to the universal ribosomal protein uL15 family.

This chain is Large ribosomal subunit protein uL15 (rpl27a), found in Dictyostelium discoideum (Social amoeba).